A 175-amino-acid chain; its full sequence is Endoribonuclease YbeY (175 aa).

Zn(2+)-binding residues include histidine 121, histidine 125, and histidine 131. Residues 154 to 175 are disordered; the sequence is PDPYSPAQQESQAQPENTELNP. A compositionally biased stretch (polar residues) spans 159-175; sequence PAQQESQAQPENTELNP.

Belongs to the endoribonuclease YbeY family. The cofactor is Zn(2+).

It is found in the cytoplasm. Single strand-specific metallo-endoribonuclease involved in late-stage 70S ribosome quality control and in maturation of the 3' terminus of the 16S rRNA. The sequence is that of Endoribonuclease YbeY from Alcanivorax borkumensis (strain ATCC 700651 / DSM 11573 / NCIMB 13689 / SK2).